The following is a 923-amino-acid chain: DNA mismatch repair protein MutS (923 aa).

671–678 (GPNMAGKS) serves as a coordination point for ATP.

It belongs to the DNA mismatch repair MutS family.

Its function is as follows. This protein is involved in the repair of mismatches in DNA. It is possible that it carries out the mismatch recognition step. This protein has a weak ATPase activity. The chain is DNA mismatch repair protein MutS from Rhodopseudomonas palustris (strain BisB5).